The chain runs to 116 residues: Cysteine-rich venom protein Cau1 (116 aa).

Positions 4-42 (SYAVVGHYTQIVWYKSDRIGCAAAYCPSSVYNYFYVCQY) constitute an SCP domain. Intrachain disulfides connect Cys24-Cys40, Cys62-Cys69, Cys65-Cys74, Cys87-Cys105, and Cys96-Cys109. A ShKT domain is found at 78–111 (CRVEDEFINCKDMAESRDCQDNYMMTNCAAFCSC).

The protein belongs to the CRISP family. Expressed by the venom gland.

Its subcellular location is the secreted. In terms of biological role, blocks contraction of smooth muscle elicited by high potassium-induced depolarization, but does not block caffeine-stimulated contraction. May target voltage-gated calcium channels on smooth muscle. The sequence is that of Cysteine-rich venom protein Cau1 from Causus rhombeatus (Rhombic night adder).